A 488-amino-acid chain; its full sequence is MLVLPPPLYEIVKRAQEWRPLDEIARELGVTQESLMRYVEEGRAKGVLQVDKRYAVAYELTEEGALRVREGLPEYKLLKAAVCDEARCVIELKHPEAPLALANLAKLGVKPRGGVIELSRDVYERVLASIEEKQRALAQLDSAPPDLLQEFLRRKLVKKVEKTLIYVKAAAPLDSVKPAEVKTALTSEDIATGRWREYYLKPFDLSIEPPQYPAPVPHFFNEFLNYVREVMVGLGFEEVRGPILEVEFWNFDALFQAQDHPAREVHDTFYVHWDGPREEPPRHLMEAVGRVHEEKWRYKWSPQKALNLVLRTQTTATTIRALAERGEGAYKVFTIGRVFRPEKLDPKHSMEFHQLDGIVVGPGLTFKHLLGQLEQIAKALGMGRVKFRPAYFPFTSPSVEVYAEHPTLGWVEFGGAGIFRPEVTEPLGVKNSRVLAWGWGLDRVAMILLGIDDIRDLFTKDLDKLREYYARWEKYRRGVGTRGIKYTL.

Residues Thr-315, 354-356 (QLD), Phe-394, and Phe-419 contribute to the L-phenylalanine site.

It belongs to the class-II aminoacyl-tRNA synthetase family. Phe-tRNA synthetase alpha subunit type 2 subfamily. In terms of assembly, tetramer of two alpha and two beta subunits. The cofactor is Mg(2+).

The protein resides in the cytoplasm. The catalysed reaction is tRNA(Phe) + L-phenylalanine + ATP = L-phenylalanyl-tRNA(Phe) + AMP + diphosphate + H(+). The sequence is that of Phenylalanine--tRNA ligase alpha subunit from Pyrobaculum calidifontis (strain DSM 21063 / JCM 11548 / VA1).